Here is a 408-residue protein sequence, read N- to C-terminus: RNA-splicing ligase RtcB1 (408 aa).

Mn(2+) contacts are provided by aspartate 75, cysteine 78, histidine 168, histidine 185, and histidine 281. Residue 167–171 (NHFIE) participates in GMP binding. GMP is bound by residues 281–282 (HN), 313–316 (PGSM), serine 320, 337–340 (HGAG), and lysine 407. Residue histidine 337 is the GMP-histidine intermediate of the active site.

This sequence belongs to the RtcB family. As to quaternary structure, monomer. Mn(2+) serves as cofactor.

It catalyses the reaction a 3'-end 3'-phospho-ribonucleotide-RNA + a 5'-end dephospho-ribonucleoside-RNA + GTP = a ribonucleotidyl-ribonucleotide-RNA + GMP + diphosphate. The catalysed reaction is a 3'-end 2',3'-cyclophospho-ribonucleotide-RNA + a 5'-end dephospho-ribonucleoside-RNA + GTP + H2O = a ribonucleotidyl-ribonucleotide-RNA + GMP + diphosphate + H(+). GTP-dependent RNA ligase that is involved in RNA repair. Joins RNA with 2',3'-cyclic-phosphate or 3'-phosphate ends to RNA with 5'-hydroxy ends. GTP-dependent RNA ligase that is involved in tRNA repair. Repairs broken tRNA(Asp) and tRNA(Arg) that have been cleaved by colicin E5 or colicin D, respectively. Does not repair damaged 16S rRNA in 30S ribosomal subunits. In Escherichia coli (strain ATCC 25922 / DSM 1103 / LMG 8223 / NCIMB 12210 / NCTC 12241 / WDCM 00013 / Seattle 1946), this protein is RNA-splicing ligase RtcB1.